The following is a 338-amino-acid chain: Nucleoid-associated protein PA14_59050 (338 aa).

It belongs to the YejK family.

It localises to the cytoplasm. Its subcellular location is the nucleoid. This Pseudomonas aeruginosa (strain UCBPP-PA14) protein is Nucleoid-associated protein PA14_59050.